The following is a 592-amino-acid chain: Aspartate--tRNA(Asp/Asn) ligase (592 aa).

An L-aspartate-binding site is contributed by Glu-173. Residues 197 to 200 (QLFK) form an aspartate region. Arg-219 contributes to the L-aspartate binding site. ATP-binding positions include 219-221 (RDE) and Gln-228. His-451 serves as a coordination point for L-aspartate. Glu-486 serves as a coordination point for ATP. Residue Arg-493 coordinates L-aspartate. 538–541 (GLDR) provides a ligand contact to ATP.

This sequence belongs to the class-II aminoacyl-tRNA synthetase family. Type 1 subfamily. Homodimer.

It localises to the cytoplasm. It catalyses the reaction tRNA(Asx) + L-aspartate + ATP = L-aspartyl-tRNA(Asx) + AMP + diphosphate. Aspartyl-tRNA synthetase with relaxed tRNA specificity since it is able to aspartylate not only its cognate tRNA(Asp) but also tRNA(Asn). Reaction proceeds in two steps: L-aspartate is first activated by ATP to form Asp-AMP and then transferred to the acceptor end of tRNA(Asp/Asn). In Alkalilimnicola ehrlichii (strain ATCC BAA-1101 / DSM 17681 / MLHE-1), this protein is Aspartate--tRNA(Asp/Asn) ligase.